The sequence spans 142 residues: Large ribosomal subunit protein uL11 (142 aa).

Belongs to the universal ribosomal protein uL11 family. Part of the ribosomal stalk of the 50S ribosomal subunit. Interacts with L10 and the large rRNA to form the base of the stalk. L10 forms an elongated spine to which L12 dimers bind in a sequential fashion forming a multimeric L10(L12)X complex. In terms of processing, one or more lysine residues are methylated.

Functionally, forms part of the ribosomal stalk which helps the ribosome interact with GTP-bound translation factors. The polypeptide is Large ribosomal subunit protein uL11 (Bradyrhizobium sp. (strain BTAi1 / ATCC BAA-1182)).